The primary structure comprises 284 residues: Putative cysteine-rich repeat secretory protein 7 (284 aa).

An N-terminal signal peptide occupies residues 1–24; it reads MARIILTAPLFYFFFSLLSHQTMS. Gnk2-homologous domains are found at residues 26-128 and 134-244; these read PQHM…NVSF and SKPV…TFVL. The disordered stretch occupies residues 247–284; it reads PAPSPSSLPPISPTSSPPLSLPPQLPPPLSQPPPPLST.

Belongs to the cysteine-rich repeat secretory protein family.

It localises to the secreted. The chain is Putative cysteine-rich repeat secretory protein 7 (CRRSP7) from Arabidopsis thaliana (Mouse-ear cress).